The primary structure comprises 261 residues: Mite allergen Eur m 3 (261 aa).

The signal sequence occupies residues 1 to 18; that stretch reads MVICNAIIVLLLAFNTLA. A propeptide spanning residues 19–29 is cleaved from the precursor; the sequence is NPILPSSPNAT. The Peptidase S1 domain occupies 30-260; the sequence is IVGGQKAKAG…FIDWIDSKRS (231 aa). C54 and C70 are oxidised to a cystine. Residues H69 and D114 each act as charge relay system in the active site. Cystine bridges form between C181–C198 and C210–C236. S214 acts as the Charge relay system in catalysis.

The protein belongs to the peptidase S1 family.

The protein localises to the secreted. This chain is Mite allergen Eur m 3 (EURM3), found in Euroglyphus maynei (Mayne's house dust mite).